The following is a 74-amino-acid chain: Neuropeptide-like protein 33 (74 aa).

A signal peptide spans 1–21; the sequence is MISTSLLLVVLLFAILAIVDA. Tyrosine 72 carries the post-translational modification Tyrosine amide.

The protein belongs to the YARP (YGGW-amide related peptide) family. As to expression, expressed in hypoderm.

The protein resides in the secreted. Functionally, may have antifungic activity against D.coniospora. This chain is Neuropeptide-like protein 33 (nlp-33), found in Caenorhabditis elegans.